A 299-amino-acid polypeptide reads, in one-letter code: 4-diphosphocytidyl-2-C-methyl-D-erythritol kinase (299 aa).

Lys-22 is a catalytic residue. 108 to 118 contributes to the ATP binding site; sequence PVGAGLGGGSS. Asp-150 is an active-site residue.

This sequence belongs to the GHMP kinase family. IspE subfamily.

The catalysed reaction is 4-CDP-2-C-methyl-D-erythritol + ATP = 4-CDP-2-C-methyl-D-erythritol 2-phosphate + ADP + H(+). Its pathway is isoprenoid biosynthesis; isopentenyl diphosphate biosynthesis via DXP pathway; isopentenyl diphosphate from 1-deoxy-D-xylulose 5-phosphate: step 3/6. Its function is as follows. Catalyzes the phosphorylation of the position 2 hydroxy group of 4-diphosphocytidyl-2C-methyl-D-erythritol. In Desulfotalea psychrophila (strain LSv54 / DSM 12343), this protein is 4-diphosphocytidyl-2-C-methyl-D-erythritol kinase.